A 161-amino-acid chain; its full sequence is uncharacterized protein (161 aa).

This is an uncharacterized protein from Mycoplasma (Bacteriophage L2).